A 749-amino-acid polypeptide reads, in one-letter code: cGMP-dependent protein kinase egl-4 (749 aa).

A coiled-coil region spans residues 30-96; it reads EAHELQKLIP…LEQKAQSAAS (67 aa). Residues 87 to 111 are disordered; sequence LEQKAQSAASPGQPPSPSPRTDQLG. 3',5'-cyclic GMP is bound by residues 234–237, 244–245, arginine 349, 358–361, 368–369, and tyrosine 403; these read GELA, RT, and GERA. Positions 438-698 constitute a Protein kinase domain; the sequence is VKRLATLGVG…VNDIRKHRWF (261 aa). Residues 444–452 and lysine 468 each bind ATP; that span reads LGVGGFGRV. Positions 461-473 match the Nuclear localization signal motif; that stretch reads KSKTYALKALKKK. Aspartate 562 functions as the Proton acceptor in the catalytic mechanism. An AGC-kinase C-terminal domain is found at 699 to 749; the sequence is MGFDWEGLRTKTLKPPILPKVNNPADVTNFDNYPPDNDVPPDEFSGWDEGF. A disordered region spans residues 723–749; it reads ADVTNFDNYPPDNDVPPDEFSGWDEGF.

Belongs to the protein kinase superfamily. AGC Ser/Thr protein kinase family. cGMP subfamily. The cofactor is Mg(2+). In terms of processing, autophosphorylated.

It localises to the cytoplasm. The protein localises to the nucleus. It carries out the reaction L-seryl-[protein] + ATP = O-phospho-L-seryl-[protein] + ADP + H(+). The enzyme catalyses L-threonyl-[protein] + ATP = O-phospho-L-threonyl-[protein] + ADP + H(+). Its activity is regulated as follows. Binding of cGMP results in enzyme activation. In terms of biological role, promotes chemoreceptor gene expression in response to increased cGMP levels by antagonizing the gene repression functions of the class II HDAC hda-4 and the mef-2 transcription factor. Regulates gene expression via recruitment of a histone deacetylase complex containing hda-2, saeg-1 and saeg-2. Represses body size and lifespan through the dbl-1 and insulin pathways, respectively. May also signal through daf-3 and/or daf-5. Role in egg-laying, dauer formation and motility. Regulates behavioral responses to various chemosensory stimuli in sensory neurons. Required for the initiation of long term adaptation to prolonged odor exposure which results in a decrease in odor seeking behavior. May regulate this process by phosphorylating tax-2, a subunit of cyclic nucleotide-gated channel tax-2/tax-4. In ASH sensory neurons, negatively regulates avoidance behavior to some bitter tastants, such as quinine, probably by phosphorylating rgs-2 and rgs-3 which are 2 regulator of G-protein signaling proteins. In AWB sensory neurons, involved in avoidance behavior to some repellent odors. In ASE left (ASEL) sensory neuron, involved in the sensing of environmental alkalinity downstream of receptor-type guanylate cyclase gcy-14. In sensory neurons, involved in the signaling pathway downstream of insulin, TGF-beta and receptor-type guanylate cyclase responsible for inducing quiescence after food intake. Might play a role in aversive olfactory learning in AWC neurons when an odor is associated with food deprivation, depending on the ins-1/age-1 signal from the AIA to the AWC neurons. Probably by regulating neuronal transmission downstream of lin-3 and receptor lin-23 and phospholipase plc-3 in ALA neurons, involved in the decrease in locomotion during the quiescent state that precedes each larval molt. In Caenorhabditis briggsae, this protein is cGMP-dependent protein kinase egl-4.